A 108-amino-acid chain; its full sequence is MGLSLAAYAGAALAEIAGCFAVWAWWRLGASALWLVPGALSLGAFAWLLALTPVEAAGRSYAVYGGVYVAASLLWLWAVEGVRPDRWDMGGAALVLAGAAVILWAPRG.

4 helical membrane passes run 5-25 (LAAYAGAALAEIAGCFAVWAW), 32-52 (ALWLVPGALSLGAFAWLLALT), 62-82 (AVYGGVYVAASLLWLWAVEGV), and 86-106 (RWDMGGAALVLAGAAVILWAP).

This sequence belongs to the UPF0060 family.

Its subcellular location is the cell inner membrane. The sequence is that of UPF0060 membrane protein Rsph17029_0436 from Cereibacter sphaeroides (strain ATCC 17029 / ATH 2.4.9) (Rhodobacter sphaeroides).